A 316-amino-acid chain; its full sequence is CRISPR-associated endonuclease Cas1 (316 aa).

Glu143, His206, and Glu221 together coordinate Mn(2+).

Belongs to the CRISPR-associated endonuclease Cas1 family. Homodimer, forms a heterotetramer with a Cas2 homodimer. It depends on Mg(2+) as a cofactor. Mn(2+) is required as a cofactor.

In terms of biological role, CRISPR (clustered regularly interspaced short palindromic repeat), is an adaptive immune system that provides protection against mobile genetic elements (viruses, transposable elements and conjugative plasmids). CRISPR clusters contain spacers, sequences complementary to antecedent mobile elements, and target invading nucleic acids. CRISPR clusters are transcribed and processed into CRISPR RNA (crRNA). Acts as a dsDNA endonuclease. Involved in the integration of spacer DNA into the CRISPR cassette. The sequence is that of CRISPR-associated endonuclease Cas1 from Aquifex aeolicus (strain VF5).